Here is a 474-residue protein sequence, read N- to C-terminus: MEYLPIFIDLKNRPVLVVGGGAVAARKIHMLQRATITIVAPALCTELKKVLIKQNISWISKNFQPIMLNKVILVIVATNDSKLNTFIYQNAEKHNILINTVDDKNKCSFIFPAIIDRNPVLIGISSCGKAPILVRILREKLELLLPKSLGFVAKLAGAWRNKVKQHIVDTVLRRQFWEKIFYNGHVVTLMEKGRPKEANKVLNYALNNSVKNKNNKTGHVTLVGAGPGDIGLLTIRGLQVIQQADIILYDYLVNSDILDLARRDADKICVGKHVGNHSISQKKLNQFIVQLAQKGNKVVRLKGGDPFIFGRGGEELQAISEAGIAFQVVPGITAGIGVAAYSGIPLTHRKYAHSVVFITGHNTNGDNQFNWNSLSNNQQTLVIYMGKINAISIRNNLIIHGRNMHTPVAVISRGTYQDQKILIGTLIELEKLTQMADHPALLVIGDVVSLHSKINWFGQKALHYYLINSIINLI.

The tract at residues 1-202 is precorrin-2 dehydrogenase /sirohydrochlorin ferrochelatase; sequence MEYLPIFIDL…GRPKEANKVL (202 aa). NAD(+) is bound by residues 22 to 23 and 41 to 42; these read AV and PA. The residue at position 126 (Ser-126) is a Phosphoserine. The uroporphyrinogen-III C-methyltransferase stretch occupies residues 218–474; sequence GHVTLVGAGP…YLINSIINLI (257 aa). Pro-227 lines the S-adenosyl-L-methionine pocket. Asp-250 acts as the Proton acceptor in catalysis. Lys-272 acts as the Proton donor in catalysis. S-adenosyl-L-methionine is bound by residues 303–305, Ile-308, 333–334, Met-385, and Gly-414; these read GGD and TA.

It in the N-terminal section; belongs to the precorrin-2 dehydrogenase / sirohydrochlorin ferrochelatase family. In the C-terminal section; belongs to the precorrin methyltransferase family.

It catalyses the reaction uroporphyrinogen III + 2 S-adenosyl-L-methionine = precorrin-2 + 2 S-adenosyl-L-homocysteine + H(+). It carries out the reaction precorrin-2 + NAD(+) = sirohydrochlorin + NADH + 2 H(+). The enzyme catalyses siroheme + 2 H(+) = sirohydrochlorin + Fe(2+). It functions in the pathway cofactor biosynthesis; adenosylcobalamin biosynthesis; precorrin-2 from uroporphyrinogen III: step 1/1. Its pathway is cofactor biosynthesis; adenosylcobalamin biosynthesis; sirohydrochlorin from precorrin-2: step 1/1. The protein operates within porphyrin-containing compound metabolism; siroheme biosynthesis; precorrin-2 from uroporphyrinogen III: step 1/1. It participates in porphyrin-containing compound metabolism; siroheme biosynthesis; siroheme from sirohydrochlorin: step 1/1. It functions in the pathway porphyrin-containing compound metabolism; siroheme biosynthesis; sirohydrochlorin from precorrin-2: step 1/1. Functionally, multifunctional enzyme that catalyzes the SAM-dependent methylations of uroporphyrinogen III at position C-2 and C-7 to form precorrin-2 via precorrin-1. Then it catalyzes the NAD-dependent ring dehydrogenation of precorrin-2 to yield sirohydrochlorin. Finally, it catalyzes the ferrochelation of sirohydrochlorin to yield siroheme. The protein is Siroheme synthase of Blochmanniella pennsylvanica (strain BPEN).